A 333-amino-acid chain; its full sequence is Beta-ketoacyl-[acyl-carrier-protein] synthase III (333 aa).

Catalysis depends on residues Cys114 and His255. The interval Gln256–Arg260 is ACP-binding. Residue Asn285 is part of the active site.

It belongs to the thiolase-like superfamily. FabH family. As to quaternary structure, homodimer.

The protein resides in the cytoplasm. The catalysed reaction is malonyl-[ACP] + acetyl-CoA + H(+) = 3-oxobutanoyl-[ACP] + CO2 + CoA. The protein operates within lipid metabolism; fatty acid biosynthesis. Its function is as follows. Catalyzes the condensation reaction of fatty acid synthesis by the addition to an acyl acceptor of two carbons from malonyl-ACP. Catalyzes the first condensation reaction which initiates fatty acid synthesis and may therefore play a role in governing the total rate of fatty acid production. Possesses both acetoacetyl-ACP synthase and acetyl transacylase activities. Its substrate specificity determines the biosynthesis of branched-chain and/or straight-chain of fatty acids. This Aliarcobacter butzleri (strain RM4018) (Arcobacter butzleri) protein is Beta-ketoacyl-[acyl-carrier-protein] synthase III.